A 663-amino-acid chain; its full sequence is UvrABC system protein B (663 aa).

Residues 26–414 (DGLESGLAKQ…DNVAEQVVRP (389 aa)) form the Helicase ATP-binding domain. 39-46 (GVTGSGKT) is a binding site for ATP. Positions 92–115 (YYDYYQPEAYVPASDTFIEKDASI) match the Beta-hairpin motif. The region spanning 430–596 (QVDDLMSEIR…GINKSVEDIL (167 aa)) is the Helicase C-terminal domain. Residues 624 to 659 (AKQINALEKQMYAHAQNMEFELAAKIRDEYLLLKEQ) enclose the UVR domain.

Belongs to the UvrB family. As to quaternary structure, forms a heterotetramer with UvrA during the search for lesions. Interacts with UvrC in an incision complex.

It localises to the cytoplasm. Its function is as follows. The UvrABC repair system catalyzes the recognition and processing of DNA lesions. A damage recognition complex composed of 2 UvrA and 2 UvrB subunits scans DNA for abnormalities. Upon binding of the UvrA(2)B(2) complex to a putative damaged site, the DNA wraps around one UvrB monomer. DNA wrap is dependent on ATP binding by UvrB and probably causes local melting of the DNA helix, facilitating insertion of UvrB beta-hairpin between the DNA strands. Then UvrB probes one DNA strand for the presence of a lesion. If a lesion is found the UvrA subunits dissociate and the UvrB-DNA preincision complex is formed. This complex is subsequently bound by UvrC and the second UvrB is released. If no lesion is found, the DNA wraps around the other UvrB subunit that will check the other stand for damage. This chain is UvrABC system protein B, found in Legionella pneumophila (strain Lens).